The chain runs to 358 residues: Heme A synthase (358 aa).

8 consecutive transmembrane segments (helical) span residues 22–42 (IQVW…VGGA), 107–127 (VLGR…WAIK), 133–153 (VLLQ…VGWW), 172–192 (LAFH…LSQG), 208–228 (FAGW…LVAG), 269–289 (FVHR…AFYV), 302–322 (AFFI…TLLQ), and 324–344 (VPIS…CFSV). Residue H271 coordinates heme. Residue H332 coordinates heme.

The protein belongs to the COX15/CtaA family. Type 2 subfamily. As to quaternary structure, interacts with CtaB. Heme b serves as cofactor.

The protein localises to the cell membrane. It catalyses the reaction Fe(II)-heme o + 2 A + H2O = Fe(II)-heme a + 2 AH2. It functions in the pathway porphyrin-containing compound metabolism; heme A biosynthesis; heme A from heme O: step 1/1. Its function is as follows. Catalyzes the conversion of heme O to heme A by two successive hydroxylations of the methyl group at C8. The first hydroxylation forms heme I, the second hydroxylation results in an unstable dihydroxymethyl group, which spontaneously dehydrates, resulting in the formyl group of heme A. In Bartonella henselae (strain ATCC 49882 / DSM 28221 / CCUG 30454 / Houston 1) (Rochalimaea henselae), this protein is Heme A synthase.